The chain runs to 1274 residues: Myosin-binding protein C, cardiac-type (1274 aa).

Met1 carries the N-acetylmethionine modification. The 88-residue stretch at 8-95 (PVSAFTKKPR…SKVKFDLKVT (88 aa)) folds into the Ig-like C2-type 1 domain. Ser47 is subject to Phosphoserine. The segment covering 95–104 (TEPAPPEKAE) has biased composition (basic and acidic residues). Residues 95–153 (TEPAPPEKAESAVAPTSMEAPETPKEVPALATQLEGNVSSPEGSVSVTQDGSVAGSQGA) are disordered. Phosphothreonine is present on Thr117. Residues 128–149 (LEGNVSSPEGSVSVTQDGSVAG) are compositionally biased toward polar residues. In terms of domain architecture, Ig-like C2-type 2 spans 157-259 (PIGLFLMRPQ…KFDSCNFNLT (103 aa)). Zn(2+) contacts are provided by Gln212, His214, Glu227, and His229. Ser279 carries the post-translational modification Phosphoserine. Thr287 is subject to Phosphothreonine; by PKA and PKC. Position 288 is a phosphoserine (Ser288). Phosphoserine; by PKA is present on Ser307. A phosphoserine mark is found at Ser312 and Ser427. Ig-like C2-type domains follow at residues 361–452 (KKST…VKEP) and 452–546 (PPVL…KKLE). The cysteines at positions 436 and 443 are disulfide-linked. Phosphoserine is present on residues Ser459 and Ser550. The residue at position 607 (Thr607) is a Phosphothreonine. One can recognise an Ig-like C2-type 5 domain in the interval 645–765 (PKIHLDCPGS…PVGEDQVNLT (121 aa)). 2 Fibronectin type-III domains span residues 774 to 870 (APAA…IGPP) and 872 to 967 (EPTH…VQEI). Residues 971-1059 (PRLQLPRHLR…ENMEDKATLV (89 aa)) enclose the Ig-like C2-type 6 domain. A Fibronectin type-III 3 domain is found at 1068–1163 (PPLDIRVVET…TKEPIFIPRP (96 aa)). Positions 1181–1269 (PSFTQPLTNR…GEAQCECRLE (89 aa)) constitute an Ig-like C2-type 7 domain. Arg1241 is modified (omega-N-methylarginine).

It belongs to the immunoglobulin superfamily. MyBP family. Post-translationally, substrate for phosphorylation by PKA and PKC. Reversible phosphorylation appears to modulate contraction. Polyubiquitinated.

In terms of biological role, thick filament-associated protein located in the crossbridge region of vertebrate striated muscle a bands. In vitro it binds MHC, F-actin and native thin filaments, and modifies the activity of actin-activated myosin ATPase. It may modulate muscle contraction or may play a more structural role. This is Myosin-binding protein C, cardiac-type (Mybpc3) from Rattus norvegicus (Rat).